We begin with the raw amino-acid sequence, 80 residues long: Bowman-Birk type proteinase inhibitor DE-4 (80 aa).

Residues 1 to 10 are compositionally biased toward acidic residues; sequence DDDHSDDEPR. The tract at residues 1–29 is disordered; that stretch reads DDDHSDDEPRESESSKPCCSSCCTRSRPP. Residues 15-29 are compositionally biased toward low complexity; sequence SKPCCSSCCTRSRPP. Cystine bridges form between Cys-18-Cys-71, Cys-19-Cys-33, Cys-22-Cys-67, Cys-23-Cys-31, Cys-41-Cys-48, Cys-45-Cys-60, and Cys-50-Cys-58.

It belongs to the Bowman-Birk serine protease inhibitor family.

The protein is Bowman-Birk type proteinase inhibitor DE-4 of Philenoptera violacea (Apple-leaf).